The sequence spans 235 residues: Glycerol-3-phosphate acyltransferase (235 aa).

Transmembrane regions (helical) follow at residues 2–22 (FTLI…TSII), 56–76 (TVTI…VVFF), 94–114 (LIAG…GFKG), 126–146 (FGIA…VVFL), 152–172 (VASI…KYLF), and 190–210 (FIHD…AAAI).

This sequence belongs to the PlsY family. As to quaternary structure, probably interacts with PlsX.

It localises to the cell inner membrane. The catalysed reaction is an acyl phosphate + sn-glycerol 3-phosphate = a 1-acyl-sn-glycero-3-phosphate + phosphate. It participates in lipid metabolism; phospholipid metabolism. Its function is as follows. Catalyzes the transfer of an acyl group from acyl-phosphate (acyl-PO(4)) to glycerol-3-phosphate (G3P) to form lysophosphatidic acid (LPA). This enzyme utilizes acyl-phosphate as fatty acyl donor, but not acyl-CoA or acyl-ACP. The polypeptide is Glycerol-3-phosphate acyltransferase (Chlorobium phaeobacteroides (strain BS1)).